The sequence spans 1013 residues: A-type ATP synthase subunit A (1013 aa).

The DOD-type homing endonuclease domain maps to 392-525 (FLGYVIGDGT…LTYLLAKLGI (134 aa)).

It belongs to the ATPase alpha/beta chains family. In terms of assembly, has multiple subunits with at least A(3), B(3), C, D, E, F, H, I and proteolipid K(x). This protein undergoes a protein self splicing that involves a post-translational excision of the VDE intervening region (intein) followed by peptide ligation.

It localises to the cell membrane. The catalysed reaction is ATP + H2O + 4 H(+)(in) = ADP + phosphate + 5 H(+)(out). Functionally, component of the A-type ATP synthase that produces ATP from ADP in the presence of a proton gradient across the membrane. The A chain is the catalytic subunit. The protein is A-type ATP synthase subunit A of Pyrococcus furiosus (strain ATCC 43587 / DSM 3638 / JCM 8422 / Vc1).